Reading from the N-terminus, the 521-residue chain is MGARGSVLSGKKTDELEKVRLRPGGKKKYMLKHVVWAVNELDRFGLAESLLESKEGCQKILKVLAPLVPTGSENLKSLFNIVCVIFCLHAEEKVKDTEEAKKIAQRHLAADTEKMPATNKPTAPPSGGNYPVQQLAGNYVHLPLSPRTLNAWVKLVEEKKFGAEVVPGFQALSEGCTPYDINQMLNCVGEHQAAMQIIREIINEEAADWDQQHPSPGPMPAGQLRDPRGSDIAGTTSTVEEQIQWMYRAQNPVPVGNIYRRWIQLGLQKCVRMYNPTNILDIKQGPKEPFQSYVDRFYKSLRAEQTDPAVKNWMTQTLLIQNANPDCKLVLKGLGMNPTLEEMLTACQGIGGPGQKARLMAEALKEALTPAPIPFAAVQQKAGKRGTVTCWNCGKQGHTARQCRAPRRQGCWKCGKTGHIMSKCPERQAGFLGLGPWGKKPRNFPMTQVPQGVTPSAPPMNPAEGMTPRGATPSAPPADPAVEMLKSYMQMGRQQRESRERPYKEVTEDLLHLNSLFGEDQ.

Residue glycine 2 is the site of N-myristoyl glycine; by host attachment. An interaction with Gp41 region spans residues 7–31 (VLSGKKTDELEKVRLRPGGKKKYML). Residues 8–43 (LSGKKTDELEKVRLRPGGKKKYMLKHVVWAVNELDR) are interaction with host CALM1. An interaction with host AP3D1 region spans residues 12-19 (KTDELEKV). An interaction with membrane phosphatidylinositol 4,5-bisphosphate and RNA region spans residues 14-33 (DELEKVRLRPGGKKKYMLKH). The Nuclear export signal signature appears at 16–22 (LEKVRLR). Residues 26 to 32 (KKKYMLK) carry the Nuclear localization signal motif. The interaction with membrane phosphatidylinositol 4,5-bisphosphate stretch occupies residues 73–77 (ENLKS). The span at 105–114 (QRHLAADTEK) shows a compositional bias: basic and acidic residues. Residues 105-129 (QRHLAADTEKMPATNKPTAPPSGGN) are disordered. Residue serine 145 is modified to Phosphoserine; by host MAPK1. The tract at residues 186–223 (NCVGEHQAAMQIIREIINEEAADWDQQHPSPGPMPAGQ) is interaction with host PPIA/CYPA and NUP153. The tract at residues 214-221 (PSPGPMPA) is PPIA/CYPA-binding loop. The dimerization/Multimerization of capsid protein p24 stretch occupies residues 274 to 360 (YNPTNILDIK…GGPGQKARLM (87 aa)). 2 consecutive CCHC-type zinc fingers follow at residues 388 to 405 (VTCWNCGKQGHTARQCRA) and 409 to 426 (QGCWKCGKTGHIMSKCPE). Positions 448–484 (QVPQGVTPSAPPMNPAEGMTPRGATPSAPPADPAVEM) are disordered. Positions 455–458 (PSAP) match the PTAP/PSAP motif motif.

It belongs to the primate lentivirus group gag polyprotein family. As to quaternary structure, homotrimer; further assembles as hexamers of trimers. Oligomerization possibly creates a central hole into which the cytoplasmic tail of the gp41 envelope protein may be inserted. Interacts with host TRIM22; this interaction seems to disrupt proper trafficking of Gag polyprotein and may interfere with budding. Interacts with host PDZD8. When ubiquitinated, interacts (via p6-gag domain) with host PACSIN2; this interaction allows PACSIN2 recruitment to viral assembly sites and its subsequent incorporation into virions. Homotrimer; further assembles as hexamers of trimers. Interacts with gp41 (via C-terminus). Interacts with host CALM1; this interaction induces a conformational change in the Matrix protein, triggering exposure of the myristate group. Interacts with host AP3D1; this interaction allows the polyprotein trafficking to multivesicular bodies during virus assembly. Part of the pre-integration complex (PIC) which is composed of viral genome, matrix protein, Vpr and integrase. In terms of assembly, homodimer; the homodimer further multimerizes as homohexamers or homopentamers. Interacts with host NUP98. Interacts with host PPIA/CYPA; this interaction stabilizes the capsid. Interacts with host NUP153. Interacts with host PDZD8; this interaction stabilizes the capsid. Interacts with host TRIM5; this interaction destabilizes the capsid. Interacts with host CPSF6. Interacts with host NONO; the interaction is the interaction is strong and promotes CGAS-mediated immunity. As to quaternary structure, interacts with host NUP98. Interacts with Vpr; this interaction allows Vpr incorporation into the virion. Interacts with host TSG101. p6-gag interacts with host PDCD6IP/AIP1. In terms of processing, gag-Pol polyprotein: Specific enzymatic cleavages by the viral protease yield mature proteins. Post-translationally, tyrosine phosphorylated presumably in the virion by a host kinase. Phosphorylation is apparently not a major regulator of membrane association. Capsid protein p24 is phosphorylated possibly by host MAPK1; this phosphorylation is necessary for Pin1-mediated virion uncoating. In terms of processing, nucleocapsid protein p7 is methylated by host PRMT6, impairing its function by reducing RNA annealing and the initiation of reverse transcription.

It is found in the host cell membrane. The protein resides in the host endosome. It localises to the host multivesicular body. Its subcellular location is the virion membrane. The protein localises to the host nucleus. It is found in the host cytoplasm. The protein resides in the virion. Mediates, with Gag-Pol polyprotein, the essential events in virion assembly, including binding the plasma membrane, making the protein-protein interactions necessary to create spherical particles, recruiting the viral Env proteins, and packaging the genomic RNA via direct interactions with the RNA packaging sequence (Psi). Its function is as follows. Targets the polyprotein to the plasma membrane via a multipartite membrane-binding signal, that includes its myristoylated N-terminus. Matrix protein is part of the pre-integration complex. Implicated in the release from host cell mediated by Vpu. Binds to RNA. Functionally, forms the conical core that encapsulates the genomic RNA-nucleocapsid complex in the virion. Most core are conical, with only 7% tubular. The core is constituted by capsid protein hexamer subunits. The core is disassembled soon after virion entry. Host restriction factors such as TRIM5-alpha or TRIMCyp bind retroviral capsids and cause premature capsid disassembly, leading to blocks in reverse transcription. Capsid restriction by TRIM5 is one of the factors which restricts HIV-1 to the human species. Host PIN1 apparently facilitates the virion uncoating. On the other hand, interactions with PDZD8 or CYPA stabilize the capsid. The capsid interacts with high affinity with human NONO, promoting detection of viral DNA by CGAS, leading to CGAS-mediated inmmune activation. In terms of biological role, encapsulates and protects viral dimeric unspliced genomic RNA (gRNA). Binds these RNAs through its zinc fingers. Acts as a nucleic acid chaperone which is involved in rearangement of nucleic acid secondary structure during gRNA retrotranscription. Also facilitates template switch leading to recombination. As part of the polyprotein, participates in gRNA dimerization, packaging, tRNA incorporation and virion assembly. Plays a role in budding of the assembled particle by interacting with the host class E VPS proteins TSG101 and PDCD6IP/AIP1. The protein is Gag polyprotein (gag) of Homo sapiens (Human).